An 80-amino-acid chain; its full sequence is Exodeoxyribonuclease 7 small subunit (80 aa).

This sequence belongs to the XseB family. As to quaternary structure, heterooligomer composed of large and small subunits.

The protein resides in the cytoplasm. It catalyses the reaction Exonucleolytic cleavage in either 5'- to 3'- or 3'- to 5'-direction to yield nucleoside 5'-phosphates.. In terms of biological role, bidirectionally degrades single-stranded DNA into large acid-insoluble oligonucleotides, which are then degraded further into small acid-soluble oligonucleotides. This is Exodeoxyribonuclease 7 small subunit from Rickettsia typhi (strain ATCC VR-144 / Wilmington).